The following is a 341-amino-acid chain: HTH-type transcriptional repressor PurR (341 aa).

Residues 2 to 56 enclose the HTH lacI-type domain; it reads ATIKDVAKRANVSTTTVSHVINKTRFVAEETRNAVWAAIKELHYSPSAVARSLKV. A DNA-binding region (H-T-H motif) is located at residues 4–23; the sequence is IKDVAKRANVSTTTVSHVIN. The DNA-binding element occupies 48–56; that stretch reads SAVARSLKV. Residues Y73, R190, T192, F221, and D275 each coordinate hypoxanthine.

In terms of assembly, homodimer.

Its pathway is purine metabolism; purine nucleotide biosynthesis [regulation]. In terms of biological role, is the main repressor of the genes involved in the de novo synthesis of purine nucleotides, regulating purB, purC, purEK, purF, purHD, purL, purMN and guaBA expression. In addition, it participates in the regulation or coregulation of genes involved in de novo pyrimidine nucleotide biosynthesis, salvage and uptake (pyrC, pyrD, carAB and codBA), and of several genes encoding enzymes necessary for nucleotide and polyamine biosynthesis (prsA, glyA, gcvTHP, speA, glnB). Binds to a 16-bp palindromic sequence located within the promoter region of pur regulon genes. The consensus binding sequence is 5'-ACGCAAACGTTTTCNT-3'. PurR is allosterically activated to bind its cognate DNA by binding the purine corepressors, hypoxanthine or guanine, thereby effecting transcription repression. The polypeptide is HTH-type transcriptional repressor PurR (purR) (Escherichia coli (strain K12)).